The following is a 129-amino-acid chain: Putative redox protein FMP46, mitochondrial (129 aa).

A mitochondrion-targeting transit peptide spans 1 to 21; the sequence is MSMFRTLQRQPRTISLFTHDL. The active site involves cysteine 94.

This sequence belongs to the FMP46 family.

The protein resides in the mitochondrion. Functionally, putative mitochondrial redox protein which could be involved in the reduction of small toxic molecules. The chain is Putative redox protein FMP46, mitochondrial (FMP46) from Candida glabrata (strain ATCC 2001 / BCRC 20586 / JCM 3761 / NBRC 0622 / NRRL Y-65 / CBS 138) (Yeast).